The sequence spans 892 residues: Protein FAM193B (892 aa).

Disordered stretches follow at residues 1 to 78 (MTRR…TSSQ), 164 to 192 (SCGG…NSGD), 237 to 321 (EHHQ…PLLK), and 379 to 403 (DEGL…THPR). Pro residues predominate over residues 28 to 37 (APEPQPPPPS). A compositionally biased stretch (basic and acidic residues) spans 56–65 (DGPREEEEPK). Over residues 169 to 185 (SHSSSSSSSSSSSSSSS) the composition is skewed to low complexity. Composition is skewed to pro residues over residues 248-258 (PNSPTGPPPHP), 274-285 (YPPPLPTTPVAP), and 309-321 (SPHP…PLLK). Residues 379–388 (DEGLGEEEDS) show a composition bias toward acidic residues. A compositionally biased stretch (low complexity) spans 391–400 (ERSSCTSSST). The stretch at 485–517 (NSARAAKRARHKLKKKEKEKARLATEALKQVNR) forms a coiled coil. Polar residues-rich tracts occupy residues 587-597 (LTPSDLSGSSQ) and 610-621 (TLGSPQSHTLQA). Disordered regions lie at residues 587–655 (LTPS…ENGL) and 671–837 (VKTP…SLDD). Positions 637 to 650 (PPPWTEVRGPPPGI) are enriched in pro residues. Residues 736–757 (KSQVSSPKQPSKGSEPAKVGSG) show a composition bias toward low complexity. A phosphoserine mark is found at Ser-764, Ser-776, and Ser-882.

This sequence belongs to the FAM193 family.

The protein localises to the cytoplasm. The protein resides in the nucleus. This chain is Protein FAM193B (Fam193b), found in Mus musculus (Mouse).